Consider the following 843-residue polypeptide: Histone-lysine N-methyltransferase PRDM9 (843 aa).

A KRAB-related domain is found at 23–86 (KVKDEFKDIS…QRQAMKPQIN (64 aa)). Disordered regions lie at residues 85 to 104 (INDS…VSPP) and 110 to 170 (VKHS…KKLK). The Zn(2+) site is built by cysteine 205, cysteine 208, cysteine 216, and histidine 219. The SET domain maps to 244–358 (PGLRISPSGI…PGCELLVWYG (115 aa)). S-adenosyl-L-methionine-binding positions include 256–258 (AGL), tyrosine 291, and 320–321 (NC). 288-294 (NSGYSWL) contributes to the substrate binding site. Tyrosine 357 contacts substrate. Lysine 368 is modified (N6,N6,N6-trimethyllysine; alternate). N6-methyllysine; alternate is present on lysine 368. Residues lysine 372 and lysine 374 each carry the N6-methyllysine modification. The segment at 388 to 411 (HPCLLCSLAFSSQKFLTQHMEWNH) adopts a C2H2-type 1 zinc-finger fold. 4 residues coordinate Zn(2+): cysteine 390, cysteine 393, histidine 406, and histidine 411. The tract at residues 418-493 (GTSARINPKP…VEELRTGQTT (76 aa)) is disordered. The segment covering 436 to 454 (QEQHVDSQNKNDKASNEVK) has biased composition (basic and acidic residues). Polar residues predominate over residues 462-472 (RISTTFPSTLK). Over residues 473 to 488 (EQMRSEESKRTVEELR) the composition is skewed to basic and acidic residues. The C2H2-type 2; degenerate zinc finger occupies 513-531 (QCGQYFSDKSNVNEHQKTH). C2H2-type zinc fingers lie at residues 537–559 (YVCR…QRTH), 565–587 (YVCR…QRTH), 593–615 (YVCR…QRTH), 621–643 (YVCR…QRTH), 649–671 (YVCR…QRTH), 677–699 (YVCR…QRTH), 705–727 (YVCR…QRTH), 733–755 (YVCR…QRTH), 761–783 (YVCR…QRTH), 789–811 (YVCR…QRTH), and 817–839 (YVCR…QRTH). 16 residues coordinate Zn(2+): cysteine 707, cysteine 710, histidine 723, histidine 727, cysteine 735, cysteine 738, histidine 751, histidine 755, cysteine 763, cysteine 766, histidine 779, histidine 783, cysteine 791, cysteine 794, histidine 807, and histidine 811. Positions 715-805 (TAKSNLIQHQ…RGFTQKSNLI (91 aa)) are DNA-binding.

Belongs to the class V-like SAM-binding methyltransferase superfamily. Homodimer. Interacts with EHMT2 and CDYL; interaction only takes place when PRDM9 is bound to hotspot DNA. Interacts with CXXC1; this interaction does not link PRDM9-activated recombination hotspot sites with DSB machinery and is not required for the hotspot recognition pathway. Forms a complex with EWSR1, REC8, SYCP3 and SYCP1; complex formation is dependent of phosphorylated form of REC8 and requires PRDM9 bound to hotspot DNA; EWSR1 joins PRDM9 with the chromosomal axis through REC8. In terms of processing, mono-methylated; automethylated. Tri-methylated; automethylated. Mono-methylation is predominant; automethylation is lower and slower than H3 peptide methylation and is in a highest S-adenosyl-L-methionine concentration-dependent. There are two major sites for automethylation at Lys-368 and Lys-374. Lysines can be simultaneously methylated, such as Lys-368(me3)/Lys-372(me1), Lys-368(me1)/Lys-374(me1) and Lys-368(me1)/Lys-372(me1)/Lys-374(me1). Automethylation is an intramolecular (cis) process. Specifically expressed in germ cells entering meiotic prophase in female fetal gonads and in postnatal testis. Expressed in early meiotic prophase.

The protein resides in the nucleus. Its subcellular location is the chromosome. The catalysed reaction is L-lysyl-[protein] + S-adenosyl-L-methionine = N(6)-methyl-L-lysyl-[protein] + S-adenosyl-L-homocysteine + H(+). It carries out the reaction N(6),N(6)-dimethyl-L-lysyl-[protein] + S-adenosyl-L-methionine = N(6),N(6),N(6)-trimethyl-L-lysyl-[protein] + S-adenosyl-L-homocysteine + H(+). It catalyses the reaction L-lysyl(4)-[histone H3] + 3 S-adenosyl-L-methionine = N(6),N(6),N(6)-trimethyl-L-lysyl(4)-[histone H3] + 3 S-adenosyl-L-homocysteine + 3 H(+). The enzyme catalyses L-lysyl(36)-[histone H3] + 3 S-adenosyl-L-methionine = N(6),N(6),N(6)-trimethyl-L-lysyl(36)-[histone H3] + 3 S-adenosyl-L-homocysteine + 3 H(+). The catalysed reaction is L-lysyl(9)-[histone H3] + 3 S-adenosyl-L-methionine = N(6),N(6),N(6)-trimethyl-L-lysyl(9)-[histone H3] + 3 S-adenosyl-L-homocysteine + 3 H(+). It carries out the reaction L-lysyl(20)-[histone H4] + S-adenosyl-L-methionine = N(6)-methyl-L-lysyl(20)-[histone H4] + S-adenosyl-L-homocysteine + H(+). It catalyses the reaction N(6)-methyl-L-lysyl(20)-[histone H4] + S-adenosyl-L-methionine = N(6),N(6)-dimethyl-L-lysyl(20)-[histone H4] + S-adenosyl-L-homocysteine + H(+). In terms of biological role, histone methyltransferase that sequentially mono-, di-, and tri-methylates both 'Lys-4' (H3K4) and 'Lys-36' (H3K36) of histone H3 to produce respectively trimethylated 'Lys-4' (H3K4me3) and trimethylated 'Lys-36' (H3K36me3) histone H3 and plays a key role in meiotic prophase by determining hotspot localization thereby promoting meiotic recombination. Can also methylate all four core histones with H3 being the best substrate and the most highly modified. Is also able, on one hand, to mono and di-methylate H4K20 and on other hand to trimethylate H3K9 with the di-methylated H3K9 as the best substrate. During meiotic prophase, binds specific DNA sequences through its zinc finger domains thereby determining hotspot localization where it promotes local H3K4me3 and H3K36me3 enrichment on the same nucleosomes through its histone methyltransferase activity. Thereby promotes double-stranded breaks (DSB) formation, at this subset of PRDM9-binding sites, that initiates meiotic recombination for the proper meiotic progression. During meiotic progression hotspot-bound PRDM9 interacts with several complexes; in early leptonema binds CDYL and EHMT2 followed by EWSR1 and CXXC1 by the end of leptonema. EWSR1 joins PRDM9 with the chromosomal axis through REC8. In this way, controls the DSB repair pathway, pairing of homologous chromosomes and sex body formation. Moreover plays a central role in the transcriptional activation of genes during early meiotic prophase thanks to H3K4me3 and H3K36me3 enrichment that represents a specific tag for epigenetic transcriptional activation. In addition performs automethylation. Acetylation and phosphorylation of histone H3 attenuate or prevent histone H3 methylation. The protein is Histone-lysine N-methyltransferase PRDM9 of Mus musculus (Mouse).